The sequence spans 226 residues: Cytidylate kinase (226 aa).

11 to 19 serves as a coordination point for ATP; sequence GPAGAGKST.

It belongs to the cytidylate kinase family. Type 1 subfamily.

It is found in the cytoplasm. The catalysed reaction is CMP + ATP = CDP + ADP. It catalyses the reaction dCMP + ATP = dCDP + ADP. This chain is Cytidylate kinase, found in Pelotomaculum thermopropionicum (strain DSM 13744 / JCM 10971 / SI).